The following is a 138-amino-acid chain: Small ribosomal subunit protein uS11 (138 aa).

Disordered regions lie at residues 1–29 and 117–138; these read MPPK…PHGA and GAIS…RRRV. The segment covering 13 to 22 has biased composition (basic residues); the sequence is KGQKTRRREK.

Belongs to the universal ribosomal protein uS11 family. As to quaternary structure, part of the 30S ribosomal subunit. Interacts with proteins S7 and S18. Binds to IF-3.

Functionally, located on the platform of the 30S subunit, it bridges several disparate RNA helices of the 16S rRNA. Forms part of the Shine-Dalgarno cleft in the 70S ribosome. In Mycobacterium ulcerans (strain Agy99), this protein is Small ribosomal subunit protein uS11.